Reading from the N-terminus, the 466-residue chain is UDP-N-acetylmuramoylalanine--D-glutamate ligase (466 aa).

Position 122–128 (122–128 (GTNGKTT)) interacts with ATP.

The protein belongs to the MurCDEF family.

It localises to the cytoplasm. It catalyses the reaction UDP-N-acetyl-alpha-D-muramoyl-L-alanine + D-glutamate + ATP = UDP-N-acetyl-alpha-D-muramoyl-L-alanyl-D-glutamate + ADP + phosphate + H(+). It functions in the pathway cell wall biogenesis; peptidoglycan biosynthesis. Its function is as follows. Cell wall formation. Catalyzes the addition of glutamate to the nucleotide precursor UDP-N-acetylmuramoyl-L-alanine (UMA). The protein is UDP-N-acetylmuramoylalanine--D-glutamate ligase of Aromatoleum aromaticum (strain DSM 19018 / LMG 30748 / EbN1) (Azoarcus sp. (strain EbN1)).